We begin with the raw amino-acid sequence, 252 residues long: Chitooligosaccharide deacetylase (252 aa).

The Mg(2+) site is built by His-61 and His-125.

It belongs to the YdjC deacetylase family. ChbG subfamily. As to quaternary structure, homodimer. Requires Mg(2+) as cofactor.

It localises to the cytoplasm. It catalyses the reaction N,N'-diacetylchitobiose + H2O = N-acetyl-beta-D-glucosaminyl-(1-&gt;4)-D-glucosamine + acetate. It carries out the reaction diacetylchitobiose-6'-phosphate + H2O = N'-monoacetylchitobiose-6'-phosphate + acetate. Its pathway is glycan degradation; chitin degradation. Involved in the degradation of chitin. ChbG is essential for growth on the acetylated chitooligosaccharides chitobiose and chitotriose but is dispensable for growth on cellobiose and chitosan dimer, the deacetylated form of chitobiose. Deacetylation of chitobiose-6-P and chitotriose-6-P is necessary for both the activation of the chb promoter by the regulatory protein ChbR and the hydrolysis of phosphorylated beta-glucosides by the phospho-beta-glucosidase ChbF. Catalyzes the removal of only one acetyl group from chitobiose-6-P to yield monoacetylchitobiose-6-P, the inducer of ChbR and the substrate of ChbF. This Salmonella typhimurium (strain LT2 / SGSC1412 / ATCC 700720) protein is Chitooligosaccharide deacetylase.